Consider the following 531-residue polypeptide: Protein SHORT-ROOT (531 aa).

Over residues 14–39 (QQSDSIITNQSSLSRTSTTTTGSPQT) the composition is skewed to low complexity. Disordered regions lie at residues 14–40 (QQSDSIITNQSSLSRTSTTTTGSPQTA) and 65–103 (SSSSSHHNHHNHNNPNTYYSPFTTPTQYHPATSSTPSST). The segment covering 81-93 (TYYSPFTTPTQYH) has biased composition (polar residues). Residues 94 to 103 (PATSSTPSST) are compositionally biased toward low complexity. In terms of domain architecture, GRAS spans 134–529 (FDFSANAKWA…QPVVWASAWR (396 aa)). Positions 141–206 (KWADSVLLEA…GSGERCYRTM (66 aa)) are leucine repeat I (LRI). The tract at residues 225–290 (VLKFQEVSPW…DDTPHLRLTT (66 aa)) is VHIID. The VHIID signature appears at 256 to 260 (IHIVD). The segment at 310-343 (EIGNRMEKFARLMGVPFKFNIIHHVGDLSEFDLN) is leucine repeat II (LRII). Residues 353–449 (LAINCVGAMH…ERAAGRAIVD (97 aa)) are PFYRE. The segment at 452-529 (ACEPSDSTER…QPVVWASAWR (78 aa)) is SAW.

This sequence belongs to the GRAS family. Interacts with SCR, SCL23, JKD and MGP. Interacts with SIEL. Association to endosomes and intercellular movement of SHR rely on the interaction with SIEL. Expressed in the stele and the quiescent center. Not detected in the ground tissue cell lineage. The SHR protein moves from the stele to a single layer of adjacent cells, where it enters the nucleus.

The protein localises to the cytoplasm. It is found in the nucleus. Its subcellular location is the early endosome. The protein resides in the late endosome. It localises to the recycling endosome. Transcription factor required for quiescent center cells specification and maintenance of surrounding stem cells, and for the asymmetric cell division involved in radial pattern formation in roots. Essential for both cell division and cell specification. Regulates the radial organization of the shoot axial organs and is required for normal shoot gravitropism. Directly controls the transcription of SCR, and when associated with SCR, of MGP, RLK, TRI, NUC and SCL3. In Arabidopsis thaliana (Mouse-ear cress), this protein is Protein SHORT-ROOT.